The chain runs to 372 residues: Cytochrome b (372 aa).

4 helical membrane passes run Phe29–Trp49, Trp73–Leu95, Val108–Val128, and Phe174–Ile194. Heme b-binding residues include His79 and His93. His178 and His192 together coordinate heme b. His197 contacts a ubiquinone. A run of 4 helical transmembrane segments spans residues Phe220–Phe240, Leu284–Gly301, Met311–Gly336, and Asp344–Leu363.

The protein belongs to the cytochrome b family. In terms of assembly, the main subunits of complex b-c1 are: cytochrome b, cytochrome c1 and the Rieske protein. Heme b serves as cofactor.

The protein localises to the mitochondrion inner membrane. Its function is as follows. Component of the ubiquinol-cytochrome c reductase complex (complex III or cytochrome b-c1 complex) that is part of the mitochondrial respiratory chain. The b-c1 complex mediates electron transfer from ubiquinol to cytochrome c. Contributes to the generation of a proton gradient across the mitochondrial membrane that is then used for ATP synthesis. The protein is Cytochrome b (mt:Cyt-b) of Leptorhynchoides thecatus (Thorny-headed worm).